Here is a 297-residue protein sequence, read N- to C-terminus: Lysenin (297 aa).

The tract at residues 10 to 33 (EQIEVDVVAVWKEGYVYENRGSTS) is N-terminal cap domain. The interval 34–107 (VDQKITITKG…SKVIEHTITI (74 aa)) is beta-hairpin domain. Residues 108 to 156 (PPTSKFTRWQLNADVGGADIEYMYLIDEVTPIGGTQSIPQVITSRAKII) are N-terminal cap domain. Residues 157-297 (VGRQIILGKT…EDKWILEVVG (141 aa)) are C-terminal receptor-binding domain. An N-(acyl)-sphingosylphosphocholine is bound by residues K185, S227, Y233, and Y282. C272 and C283 form a disulfide bridge.

The protein belongs to the lysenin family. As to quaternary structure, binds to sphingomyelin as a monomer by using its C-terminal domain. Forms a nonamer when sphingomyelin/lysenin ratio is lower than ca 500. Oligomerization, but not binding, is influenced by the fluidity of sphingomyelin. In terms of tissue distribution, expressed by coelomocytes.

Its subcellular location is the secreted. The protein localises to the target cell membrane. In terms of biological role, pore-forming toxin that defensively acts against parasitic microorganisms by forming pores in sphingomyelin-containing membranes. Has hemolytic activity and is also cytotoxic to spermatozoa of some species of invertebrates and many species of vertebrates and to amphibian larvae, guinea pig polymorphonuclear leukocytes, chicken fibroblasts, normal spleen cells and various tumor cells. Is lethal for various species of reptiles, amphibian, birds and mammals. Induces smooth muscle contraction. It binds sphingomyelin and induces hemolysis in the same manner as lysenin-related protein 2, and is 10-fold more effective than lysenin-related protein 1. The sequence is that of Lysenin from Eisenia fetida (Red wiggler worm).